Reading from the N-terminus, the 591-residue chain is MKKISLPKIGIRPVIDGRRMGVRESLEEQTMNMAKATAALLTEKLRHACGAAVECVISDTCIAGMAEAAACEEKFSSQNVGLTITVTPCWCYGSETIDMDPTRPKAIWGFNGTERPGAVYLAAALAAHSQKGIPAFSIYGHDVQDADDTSIPADVEEKLLRFARAGLAVASMKGKSYLSLGGVSMGIAGSIVDHNFFESWLGMKVQAVDMTELRRRIDQKIYDEAELEMALAWADKNFRYGEDENNKQYQRNAEQSRAVLRESLLMAMCIRDMMQGNSKLADIGRVEESLGYNAIAAGFQGQRHWTDQYPNGDTAEAILNSSFDWNGVREPFVVATENDSLNGVAMLMGHQLTGTAQVFADVRTYWSPEAIERVTGHKLDGLAEHGIIHLINSGSAALDGSCKQRDSEGNPTMKPHWEISQKEADACLAATEWCPAIHEYFRGGGYSSRFLTEGGVPFTMTRVNIIKGLGPVLQIAEGWSVELPKDVHDILNKRTNSTWPTTWFAPRLTGKGPFTDVYSVMANWGANHGVLTIGHVGADFITLASMLRIPVCMHNVEETKVYRPSAWAAHGMDIEGQDYRACQNYGPLYKR.

Active-site proton acceptor residues include glutamate 337 and aspartate 361. Residues glutamate 337, aspartate 361, and histidine 528 each contribute to the Mn(2+) site.

It belongs to the L-fucose isomerase family. Homohexamer. Mn(2+) serves as cofactor.

The protein resides in the cytoplasm. It carries out the reaction L-fucose = L-fuculose. It participates in carbohydrate degradation; L-fucose degradation; L-lactaldehyde and glycerone phosphate from L-fucose: step 1/3. Functionally, converts the aldose L-fucose into the corresponding ketose L-fuculose. In Escherichia coli O139:H28 (strain E24377A / ETEC), this protein is L-fucose isomerase.